The chain runs to 304 residues: Olfactory receptor 8G2 (304 aa).

The Extracellular portion of the chain corresponds to 1–41 (MVFLSSVETDQRKMSAGNHSSVTEFILAGLSEQPELQLRLF). Asparagine 18 carries N-linked (GlcNAc...) asparagine glycosylation. The chain crosses the membrane as a helical span at residues 42–62 (LLFLGIYVVTVVGNLSMITLI). Residues 63–69 (GLSSHLH) are Cytoplasmic-facing. Residues 70–90 (TPMYYFLSGLSFIDLCHSTII) form a helical membrane-spanning segment. Topologically, residues 91-110 (TPKMLVNFVTEKNIISYPEC) are extracellular. Cysteine 110 and cysteine 192 are disulfide-bonded. A helical membrane pass occupies residues 111 to 130 (MTQLYFFLIFAIAECHMLAV). Residues 131–154 (TAYDRYVAICSPLLYNVIMSYHHC) are Cytoplasmic-facing. A helical membrane pass occupies residues 155–175 (FWLTVGVYVLGILGSTIHTGF). At 176 to 193 (MLRLFLCKTNVINHYFCD) the chain is on the extracellular side. The helical transmembrane segment at 194 to 214 (LFPLLGLSCSSTYINELLVLV) threads the bilayer. Residues 215–217 (LSA) are Cytoplasmic-facing. The chain crosses the membrane as a helical span at residues 218-238 (FNILTPALTILASYIFIIASI). At 239–257 (LRIRSTEGRSKAFSTCSSH) the chain is on the extracellular side. A helical transmembrane segment spans residues 258–278 (ILAVAVFFGSAAFMYLQPSSV). The Cytoplasmic portion of the chain corresponds to 279–304 (SSMDQRKVSSVFYTTIVPMLNPQSIA).

This sequence belongs to the G-protein coupled receptor 1 family.

It localises to the cell membrane. In terms of biological role, odorant receptor. The protein is Olfactory receptor 8G2 of Homo sapiens (Human).